We begin with the raw amino-acid sequence, 382 residues long: GDP-mannose 4,6 dehydratase 2 (382 aa).

NADP(+)-binding positions include 40–45 (GITGQD), 97–98 (DM), 119–123 (LAAQS), and Y134. Residue T166 is part of the active site. Active-site nucleophile residues include E168 and Y190. Residues K194, H220, and R225 each contribute to the NADP(+) site.

Belongs to the NAD(P)-dependent epimerase/dehydratase family. GDP-mannose 4,6-dehydratase subfamily. Requires NADP(+) as cofactor.

It carries out the reaction GDP-alpha-D-mannose = GDP-4-dehydro-alpha-D-rhamnose + H2O. It participates in nucleotide-sugar biosynthesis; GDP-L-fucose biosynthesis via de novo pathway; GDP-L-fucose from GDP-alpha-D-mannose: step 1/2. Catalyzes the conversion of GDP-D-mannose to GDP-4-dehydro-6-deoxy-D-mannose. This Caenorhabditis elegans protein is GDP-mannose 4,6 dehydratase 2 (gmd-2).